A 70-amino-acid polypeptide reads, in one-letter code: UPF0519 protein B (70 aa).

It belongs to the UPF0519 family.

The polypeptide is UPF0519 protein B (sigN122) (Dictyostelium discoideum (Social amoeba)).